A 628-amino-acid polypeptide reads, in one-letter code: Chaperone protein HtpG (628 aa).

The interval 1–340 (MKGQETRGFQ…SNDLPLNVSR (340 aa)) is a; substrate-binding. Positions 341–556 (EILQDSRVTQ…ADDMTTQMAK (216 aa)) are b. Residues 557-628 (LFAAAGQAAP…IRRMNQLLNA (72 aa)) form a c region.

The protein belongs to the heat shock protein 90 family. In terms of assembly, homodimer.

The protein resides in the cytoplasm. Functionally, molecular chaperone. Has ATPase activity. This chain is Chaperone protein HtpG, found in Sodalis glossinidius (strain morsitans).